We begin with the raw amino-acid sequence, 245 residues long: MAGHSKWANIQHRKGRQDAKRGKLFTKAAKEIIIAAKGGGDPSMNPRLRAAIAAAKAVNLPKDKIEAAIRKGTGEDAGGDLTETFYEGYGPGGIAVMVEVATDNKNRTVAEVRHLFSKHGGSMGENGSVAWMFDRKGVISVEKSAYPEEKIMEAALEAGADDVIDDGEEWTIHTAMTDFTAVRDSLETAGIVMQSAELAMVPQNLVAVDADMGQKVLRLMDALDDNDDVQNVYANVDFPEDMPED.

Residues 1–21 (MAGHSKWANIQHRKGRQDAKR) form a disordered region.

It belongs to the TACO1 family.

The protein localises to the cytoplasm. The sequence is that of Probable transcriptional regulatory protein Ddes_0536 from Desulfovibrio desulfuricans (strain ATCC 27774 / DSM 6949 / MB).